A 94-amino-acid chain; its full sequence is Large ribosomal subunit protein bL25 (94 aa).

The protein belongs to the bacterial ribosomal protein bL25 family. Part of the 50S ribosomal subunit; part of the 5S rRNA/L5/L18/L25 subcomplex. Contacts the 5S rRNA. Binds to the 5S rRNA independently of L5 and L18.

Functionally, this is one of the proteins that binds to the 5S RNA in the ribosome where it forms part of the central protuberance. This is Large ribosomal subunit protein bL25 from Serratia proteamaculans (strain 568).